Reading from the N-terminus, the 247-residue chain is 2,3-bisphosphoglycerate-dependent phosphoglycerate mutase (247 aa).

Substrate is bound by residues 9–16, 22–23, Arg61, 88–91, Lys99, 115–116, and 183–184; these read RHGESEWN, TG, ERHY, RR, and GN. Catalysis depends on His10, which acts as the Tele-phosphohistidine intermediate. Residue Glu88 is the Proton donor/acceptor of the active site.

This sequence belongs to the phosphoglycerate mutase family. BPG-dependent PGAM subfamily.

The catalysed reaction is (2R)-2-phosphoglycerate = (2R)-3-phosphoglycerate. It functions in the pathway carbohydrate degradation; glycolysis; pyruvate from D-glyceraldehyde 3-phosphate: step 3/5. Functionally, catalyzes the interconversion of 2-phosphoglycerate and 3-phosphoglycerate. The chain is 2,3-bisphosphoglycerate-dependent phosphoglycerate mutase from Nocardioides sp. (strain ATCC BAA-499 / JS614).